A 601-amino-acid chain; its full sequence is Elongation factor 4 (601 aa).

The tr-type G domain occupies 7-189; the sequence is DNIRNFSIVA…AIVKRLPPPK (183 aa). GTP contacts are provided by residues 19 to 24 and 136 to 139; these read DHGKST and NKVD.

It belongs to the TRAFAC class translation factor GTPase superfamily. Classic translation factor GTPase family. LepA subfamily.

It localises to the cell inner membrane. The enzyme catalyses GTP + H2O = GDP + phosphate + H(+). Required for accurate and efficient protein synthesis under certain stress conditions. May act as a fidelity factor of the translation reaction, by catalyzing a one-codon backward translocation of tRNAs on improperly translocated ribosomes. Back-translocation proceeds from a post-translocation (POST) complex to a pre-translocation (PRE) complex, thus giving elongation factor G a second chance to translocate the tRNAs correctly. Binds to ribosomes in a GTP-dependent manner. In Methylorubrum populi (strain ATCC BAA-705 / NCIMB 13946 / BJ001) (Methylobacterium populi), this protein is Elongation factor 4.